Reading from the N-terminus, the 314-residue chain is Probable 5-dehydro-4-deoxyglucarate dehydratase (314 aa).

Belongs to the DapA family.

The enzyme catalyses 5-dehydro-4-deoxy-D-glucarate + H(+) = 2,5-dioxopentanoate + CO2 + H2O. It functions in the pathway carbohydrate acid metabolism; D-glucarate degradation; 2,5-dioxopentanoate from D-glucarate: step 2/2. The chain is Probable 5-dehydro-4-deoxyglucarate dehydratase from Bradyrhizobium diazoefficiens (strain JCM 10833 / BCRC 13528 / IAM 13628 / NBRC 14792 / USDA 110).